Here is a 508-residue protein sequence, read N- to C-terminus: Photosystem II CP47 reaction center protein (508 aa).

6 helical membrane passes run Ala21 to Ser36, Ile101 to Trp115, Gly140 to Phe156, Ile203 to Ser218, Val237 to Val252, and Ser457 to Arg472.

This sequence belongs to the PsbB/PsbC family. PsbB subfamily. As to quaternary structure, PSII is composed of 1 copy each of membrane proteins PsbA, PsbB, PsbC, PsbD, PsbE, PsbF, PsbH, PsbI, PsbJ, PsbK, PsbL, PsbM, PsbT, PsbX, PsbY, PsbZ, Psb30/Ycf12, at least 3 peripheral proteins of the oxygen-evolving complex and a large number of cofactors. It forms dimeric complexes. Requires Binds multiple chlorophylls. PSII binds additional chlorophylls, carotenoids and specific lipids. as cofactor.

The protein resides in the plastid. Its subcellular location is the chloroplast thylakoid membrane. Functionally, one of the components of the core complex of photosystem II (PSII). It binds chlorophyll and helps catalyze the primary light-induced photochemical processes of PSII. PSII is a light-driven water:plastoquinone oxidoreductase, using light energy to abstract electrons from H(2)O, generating O(2) and a proton gradient subsequently used for ATP formation. The protein is Photosystem II CP47 reaction center protein of Oenothera argillicola (Appalachian evening primrose).